Here is a 249-residue protein sequence, read N- to C-terminus: Uridylate kinase (249 aa).

An ATP-binding site is contributed by 22–25 (KISG). Positions 30–35 (GTQGFG) are involved in allosteric activation by GTP. G64 provides a ligand contact to UMP. ATP is bound by residues G65 and R69. UMP-binding positions include D84 and 145–152 (TGNPYFTT). Residues N173, Y179, and D182 each contribute to the ATP site.

The protein belongs to the UMP kinase family. Homohexamer.

The protein localises to the cytoplasm. The enzyme catalyses UMP + ATP = UDP + ADP. It functions in the pathway pyrimidine metabolism; CTP biosynthesis via de novo pathway; UDP from UMP (UMPK route): step 1/1. Its activity is regulated as follows. Allosterically activated by GTP. Inhibited by UTP. Its function is as follows. Catalyzes the reversible phosphorylation of UMP to UDP. This Ruegeria sp. (strain TM1040) (Silicibacter sp.) protein is Uridylate kinase.